The chain runs to 214 residues: Uridine kinase (214 aa).

ATP is bound at residue 15–22; it reads GASASGKS.

This sequence belongs to the uridine kinase family.

The protein localises to the cytoplasm. The catalysed reaction is uridine + ATP = UMP + ADP + H(+). It catalyses the reaction cytidine + ATP = CMP + ADP + H(+). It participates in pyrimidine metabolism; CTP biosynthesis via salvage pathway; CTP from cytidine: step 1/3. Its pathway is pyrimidine metabolism; UMP biosynthesis via salvage pathway; UMP from uridine: step 1/1. The protein is Uridine kinase of Aeromonas salmonicida (strain A449).